The sequence spans 95 residues: F(1)-ATPase inhibitor IF(1), mitochondrial (95 aa).

The N-terminal 25 residues, M1 to L25, are a transit peptide targeting the mitochondrion. 2 disordered regions span residues T20–A48 and L76–N95.

The protein belongs to the ATPase inhibitor family. As to quaternary structure, associates with the mitochondrial small ribosomal subunit (mt-SSU). IF(1) coiled-coil forms a helical bundle with the C-terminal extension of uS17m and also binds to mS27 in the mtSSU tail. Since the C-terminal extension of uS17m stabilizing the IF(1) on the mt-SSU is specific to N.crassa, IF(1) binding might also be specific.

It is found in the mitochondrion. Endogenous F(1)F(0)-ATPase inhibitor limiting ATP depletion when the mitochondrial membrane potential falls below a threshold and the F(1)F(0)-ATP synthase starts hydrolyzing ATP to pump protons out of the mitochondrial matrix. Required to avoid the consumption of cellular ATP when the F(1)F(0)-ATP synthase enzyme acts as an ATP hydrolase. Functions through inserting its N-terminal part into the catalytically active F1-ATPase, thereby blocking its rotational movement and subsequently the ATP hydrolase activity. In Neurospora crassa (strain ATCC 24698 / 74-OR23-1A / CBS 708.71 / DSM 1257 / FGSC 987), this protein is F(1)-ATPase inhibitor IF(1), mitochondrial (inh1).